We begin with the raw amino-acid sequence, 529 residues long: Delayed-rectifier potassium channel regulatory subunit KCNS1 (529 aa).

Residues M1 to L217 lie on the Cytoplasmic side of the membrane. Residues P218 to I239 form a helical membrane-spanning segment. The Extracellular portion of the chain corresponds to H240 to P270. Residues V271–L293 traverse the membrane as a helical segment. The Cytoplasmic portion of the chain corresponds to A294 to P304. The helical transmembrane segment at L305 to A322 threads the bilayer. At G323–L340 the chain is on the extracellular side. A helical; Voltage-sensor membrane pass occupies residues G341–H361. At S362–Y376 the chain is on the cytoplasmic side. The helical transmembrane segment at R377–Y398 threads the bilayer. The Extracellular portion of the chain corresponds to T399–I411. Residues P412 to T423 constitute an intramembrane region (helical). A Selectivity filter motif is present at residues T424–D429. The stretch at T424–V431 is an intramembrane region. Residues P432 to K438 lie on the Extracellular side of the membrane. The helical transmembrane segment at L439–Y467 threads the bilayer. Topologically, residues R468–Y529 are cytoplasmic. Residues G494–Y529 are disordered. The span at T502–D514 shows a compositional bias: basic and acidic residues.

The protein belongs to the potassium channel family. S (TC 1.A.1.2) subfamily. Kv9.1/KCNS1 sub-subfamily. As to quaternary structure, heterotetramer with KCNB1. Heterotetramer with KCNB2. Does not form homomultimers.

The protein resides in the cell membrane. Its function is as follows. Potassium channel regulatory subunit that modulate the delayed rectifier voltage-gated potassium channel activity of KCNB1 and KCNB2 by altering their kinetics, expression levels, and shifting the half-inactivation potential to more polarized values. While it does not form functional channels on its own, it can form functional heterotetrameric channels with KCNB1 and KCNB2. Each regulatory subunit has unique regulatory properties that can lead to extensive inhibition, significant changes in kinetics, and/or substantial shifts in the voltage dependencies of the inactivation process. This Macaca mulatta (Rhesus macaque) protein is Delayed-rectifier potassium channel regulatory subunit KCNS1.